Reading from the N-terminus, the 294-residue chain is Glycine-rich protein 2 (294 aa).

Residues 1–20 (MKMWFRLATFVTLIIEFAHC) form the signal peptide. The segment covering 205–221 (TGSQTGAAANGTSAGAA) has biased composition (low complexity). Residues 205–225 (TGSQTGAAANGTSAGAAVRGG) form a disordered region.

Nacreous layer of shell (at protein level). Expressed primarily in the mantle with highest level in the mantle pallium and lower level in the mantle edge.

The protein localises to the secreted. The polypeptide is Glycine-rich protein 2 (Pinctada maxima (Silver-lipped pearl oyster)).